A 731-amino-acid polypeptide reads, in one-letter code: Unconventional prefoldin RPB5 interactor-like protein (731 aa).

Coiled coils occupy residues 91–115 (RLKL…KLHT) and 143–176 (LAEH…LRKL). Residues 205–217 (PLKSTNESSPKSL) are compositionally biased toward polar residues. Disordered regions lie at residues 205 to 224 (PLKS…EEDE), 259 to 302 (MSGE…EEEV), and 370 to 396 (ASEE…TVSE). Positions 220–258 (EEEDELWKKLEAEEQNEADELSSEAEESLKTTDNLVRQL) form a coiled coil. Residues 285–300 (ISEDDGDDDDEGDQEE) show a composition bias toward acidic residues. 2 coiled-coil regions span residues 357–379 (DDLQ…EVVE) and 452–477 (SIKT…VKEN). 2 stretches are compositionally biased toward polar residues: residues 508-518 (GAIPSPSSDQS) and 575-599 (SQFS…TSND). Disordered regions lie at residues 508-527 (GAIP…KPSD), 567-682 (GSAY…DLRD), and 694-731 (VEKE…LNKT). The span at 611–621 (FYEKYEKDRAK) shows a compositional bias: basic and acidic residues. Positions 623–644 (SKSNSSEGDATDPESATKSILR) are enriched in polar residues. The segment covering 661 to 673 (KKGRKVRNQKKKE) has biased composition (basic residues). The segment covering 721–731 (RFKEQRALNKT) has biased composition (basic and acidic residues).

The protein belongs to the RNA polymerase II subunit 5-mediating protein family. As to quaternary structure, interacts with serine/threonine-protein phosphatases flw/PP1beta9C and Pp1-87B with higher affinity for Pp1-87B.

Its subcellular location is the cytoplasm. The protein localises to the chromosome. It is found in the nucleus. Inhibits the activity of serine/threonine-protein phosphatases flw/PP1beta9C and Pp1-87B. Required for germ line cell viability and differentiation, normal transcriptional activity and maintenance of DNA integrity. This is Unconventional prefoldin RPB5 interactor-like protein from Drosophila melanogaster (Fruit fly).